Here is a 207-residue protein sequence, read N- to C-terminus: Reticulon-1-A (207 aa).

In terms of domain architecture, Reticulon spans Ala-21 to Glu-207. 2 consecutive transmembrane segments (helical) span residues Ile-35–Val-55 and Val-139–Met-159.

In terms of tissue distribution, expressed in the animal hemisphere (presumptive neural ectoderm) of blastula and gastrula stage embryos, and along the anterior neural border, in the panplacodal primordium, and in the dorsolateral side of archenteron roof of late neurula embryos. At the tailbud stage, expression localizes to the central nervous system, including the spinal cord, prosencephalon, mesencephalon and rhombencephalon, as well as the lateral line placode, otic vesicle and pronephros.

Its subcellular location is the endoplasmic reticulum membrane. It is found in the nucleus. Inhibits amyloid precursor protein processing, probably by blocking BACE1 activity. The polypeptide is Reticulon-1-A (rtn1-a) (Xenopus laevis (African clawed frog)).